Consider the following 287-residue polypeptide: Nucleotide-binding protein Asuc_0930 (287 aa).

8-15 (GRSGAGKS) provides a ligand contact to ATP. GTP is bound at residue 56–59 (DIRN).

It belongs to the RapZ-like family.

In terms of biological role, displays ATPase and GTPase activities. This chain is Nucleotide-binding protein Asuc_0930, found in Actinobacillus succinogenes (strain ATCC 55618 / DSM 22257 / CCUG 43843 / 130Z).